The primary structure comprises 202 residues: Imidazole glycerol phosphate synthase subunit HisH (202 aa).

In terms of domain architecture, Glutamine amidotransferase type-1 spans 3–202 (RIVILDYGLG…KILKNFVDMC (200 aa)). The active-site Nucleophile is Cys-79. Residues His-183 and Glu-185 contribute to the active site.

In terms of assembly, heterodimer of HisH and HisF.

It localises to the cytoplasm. It carries out the reaction 5-[(5-phospho-1-deoxy-D-ribulos-1-ylimino)methylamino]-1-(5-phospho-beta-D-ribosyl)imidazole-4-carboxamide + L-glutamine = D-erythro-1-(imidazol-4-yl)glycerol 3-phosphate + 5-amino-1-(5-phospho-beta-D-ribosyl)imidazole-4-carboxamide + L-glutamate + H(+). The catalysed reaction is L-glutamine + H2O = L-glutamate + NH4(+). Its pathway is amino-acid biosynthesis; L-histidine biosynthesis; L-histidine from 5-phospho-alpha-D-ribose 1-diphosphate: step 5/9. Its function is as follows. IGPS catalyzes the conversion of PRFAR and glutamine to IGP, AICAR and glutamate. The HisH subunit catalyzes the hydrolysis of glutamine to glutamate and ammonia as part of the synthesis of IGP and AICAR. The resulting ammonia molecule is channeled to the active site of HisF. The sequence is that of Imidazole glycerol phosphate synthase subunit HisH from Methanosarcina barkeri (strain Fusaro / DSM 804).